The sequence spans 445 residues: Hydroxymethylglutaryl-CoA synthase (445 aa).

Residue Asp31 participates in (3S)-3-hydroxy-3-methylglutaryl-CoA binding. Glu83 serves as the catalytic Proton donor/acceptor. 7 residues coordinate (3S)-3-hydroxy-3-methylglutaryl-CoA: Cys120, Thr163, Ser211, His244, Lys253, Asn328, and Ser364. Catalysis depends on Cys120, which acts as the Acyl-thioester intermediate. The active-site Proton donor/acceptor is the His244.

It belongs to the thiolase-like superfamily. HMG-CoA synthase family.

It catalyses the reaction acetoacetyl-CoA + acetyl-CoA + H2O = (3S)-3-hydroxy-3-methylglutaryl-CoA + CoA + H(+). It participates in metabolic intermediate biosynthesis; (R)-mevalonate biosynthesis; (R)-mevalonate from acetyl-CoA: step 2/3. In contrast to bacterial and eukaryotic HMG-CoA synthases, is insensitive to feedback substrate inhibition by acetoacetyl-CoA. Enzymatic activity is inhibited by hymeglusin, which also blocks the propagation of H.volcanii cells in vivo, indicating the critical role that the mevalonate pathway plays in isoprenoid biosynthesis by these archaea. Catalyzes the condensation of acetyl-CoA with acetoacetyl-CoA to form 3-hydroxy-3-methylglutaryl-CoA (HMG-CoA). Functions in the mevalonate (MVA) pathway leading to isopentenyl diphosphate (IPP), a key precursor for the biosynthesis of isoprenoid compounds such as archaeal membrane lipids. This chain is Hydroxymethylglutaryl-CoA synthase (hmgB), found in Haloferax volcanii (strain ATCC 29605 / DSM 3757 / JCM 8879 / NBRC 14742 / NCIMB 2012 / VKM B-1768 / DS2) (Halobacterium volcanii).